We begin with the raw amino-acid sequence, 519 residues long: Exodeoxyribonuclease 7 large subunit (519 aa).

Positions 500–519 (VGRGKTRKPKEEPPAQGSLL) are disordered.

This sequence belongs to the XseA family. Heterooligomer composed of large and small subunits.

Its subcellular location is the cytoplasm. The enzyme catalyses Exonucleolytic cleavage in either 5'- to 3'- or 3'- to 5'-direction to yield nucleoside 5'-phosphates.. Bidirectionally degrades single-stranded DNA into large acid-insoluble oligonucleotides, which are then degraded further into small acid-soluble oligonucleotides. The chain is Exodeoxyribonuclease 7 large subunit from Cereibacter sphaeroides (strain ATCC 17029 / ATH 2.4.9) (Rhodobacter sphaeroides).